A 463-amino-acid chain; its full sequence is Argininosuccinate lyase (463 aa).

Belongs to the lyase 1 family. Argininosuccinate lyase subfamily.

Its subcellular location is the cytoplasm. The enzyme catalyses 2-(N(omega)-L-arginino)succinate = fumarate + L-arginine. It participates in amino-acid biosynthesis; L-arginine biosynthesis; L-arginine from L-ornithine and carbamoyl phosphate: step 3/3. The chain is Argininosuccinate lyase from Dinoroseobacter shibae (strain DSM 16493 / NCIMB 14021 / DFL 12).